Consider the following 540-residue polypeptide: Intestinal-type alkaline phosphatase 1 (540 aa).

The N-terminal stretch at 1–20 (MQGDWVLLLLLGLRIHLSFG) is a signal peptide. Position 62 (D62) interacts with Mg(2+). The Zn(2+) site is built by D62 and S112. S112 (phosphoserine intermediate) is an active-site residue. A disulfide bond links C141 and C203. N-linked (GlcNAc...) asparagine glycosylation is present at N142. S175 serves as a coordination point for Mg(2+). Residues E236, F289, and E290 each contribute to the Ca(2+) site. An N-linked (GlcNAc...) asparagine glycan is attached at N301. D305 provides a ligand contact to Ca(2+). E331 serves as a coordination point for Mg(2+). Positions 336, 340, 377, and 378 each coordinate Zn(2+). N428 carries an N-linked (GlcNAc...) asparagine glycan. H452 provides a ligand contact to Zn(2+). C487 and C494 are joined by a disulfide. A lipid anchor (GPI-anchor amidated asparagine) is attached at N511. A propeptide spans 512–540 (SAITMNNVLLSLQLLVSMLLLVGTALVVS) (removed in mature form).

This sequence belongs to the alkaline phosphatase family. In terms of assembly, homodimer. Requires Mg(2+) as cofactor. Zn(2+) serves as cofactor. It depends on Ca(2+) as a cofactor.

Its subcellular location is the cell membrane. The catalysed reaction is a phosphate monoester + H2O = an alcohol + phosphate. Its function is as follows. Alkaline phosphatase that can hydrolyze various phosphate compounds. The chain is Intestinal-type alkaline phosphatase 1 (Alpi) from Rattus norvegicus (Rat).